A 251-amino-acid chain; its full sequence is NADPH-dependent oxidoreductase (251 aa).

It belongs to the flavin oxidoreductase frp family. FMN serves as cofactor.

Its function is as follows. Reduces FMN, organic nitro compounds and disulfide DTNB. Involved in maintenance of the cellular redox state and the disulfide stress response. The chain is NADPH-dependent oxidoreductase (nfrA) from Staphylococcus saprophyticus subsp. saprophyticus (strain ATCC 15305 / DSM 20229 / NCIMB 8711 / NCTC 7292 / S-41).